A 134-amino-acid chain; its full sequence is Histone H3-like centromeric protein A (134 aa).

Over residues 1-14 (MGPRRKPQTPRRRP) the composition is skewed to basic residues. The segment at 1–34 (MGPRRKPQTPRRRPSSPAPGPSRQSSSVGSQTLR) is disordered. Gly-2 carries the n,N,N-trimethylglycine modification. 2 positions are modified to phosphoserine: Ser-16 and Ser-22. An important for flexibility of DNA ends that protrude from nucleosomes region spans residues 34-48 (RRRQKFMWLKEIKTL). Positions 35–134 (RRQKFMWLKE…RIRGFEGGLP (100 aa)) are H3-like. Position 62 is a phosphoserine (Ser-62). The tract at residues 69 to 110 (CEKFSRGVDFWWQAQALLALQEAAEAFLIHLFEDAYLLSLHA) is CATD.

It belongs to the histone H3 family. As to quaternary structure, component of centromeric nucleosomes, where DNA is wrapped around a histone octamer core. The octamer contains two molecules each of H2A, H2B, CENPA and H4 assembled in one CENPA-H4 heterotetramer and two H2A-H2B heterodimers. CENPA modulates the DNA-binding characteristics of nucleosomes so that protruding DNA ends have higher flexibility than in nucleosomes containing conventional histone H3. Inhibits binding of histone H1 to nucleosomes, since histone H1 binds preferentially to rigid DNA linkers that protrude from nucleosomes. Nucleosomes containing CENPA also contain histone H2A variants such as MACROH2A and H2A.Z/H2AZ1. The CENPA-H4 heterotetramer is more compact and structurally more rigid than corresponding H3-H4 heterotetramers. Can assemble into nucleosomes that contain both CENPA and histone H3.3; these nucleosomes interact with a single CENPC chain. Heterotrimer composed of HJURP, CENPA and histone H4, where HJURP interacts with the dimer formed by CENPA and histone H4 and prevents tetramerization of CENPA and H4. Component of the CENPA-NAC complex, at least composed of CENPA, CENPC, CENPH, CENPM, CENPN, CENPT and CENPU. Interacts (via CATD domain) with HJURP; the interaction is direct and is required for its localization to centromeres. Interacts with CENPC, CENPN and CENPT; interaction is direct. Part of a centromere complex consisting of CENPA, CENPT and CENPW. Identified in centromere complexes containing histones H2A, H2B and H4, and at least CENPA, CENPB, CENPC, CENPT, CENPN, HJURP, SUPT16H, SSRP1 and RSF1. Can self-associate. The CENPA-H4 heterotetramer can bind DNA by itself (in vitro). Interacts with CDK1, PPP1CA and RBBP7. Poly-ADP-ribosylated by PARP1. In terms of processing, trimethylated by NTMT1 at the N-terminal glycine after cleavage of Met-1. Methylation is low before incorporation into nucleosomes and increases with cell cycle progression, with the highest levels in mitotic nucleosomes. Post-translationally, phosphorylated by CDK1 at Ser-62 during early mitosis; this abolishes association with chromatin and centromeres, prevents interaction with HJURP and thereby prevents premature assembly of CENPA into centromeres. Dephosphorylated at Ser-62 by PPP1CA during late mitosis.

Its subcellular location is the nucleus. The protein localises to the chromosome. It is found in the centromere. Its function is as follows. Histone H3-like nucleosomal protein that is specifically found in centromeric nucleosomes. Replaces conventional H3 in the nucleosome core of centromeric chromatin that serves as an assembly site for the inner kinetochore. The presence of CENPA subtly modifies the nucleosome structure and the way DNA is wrapped around the nucleosome and gives rise to protruding DNA ends that are less well-ordered and rigid compared to nucleosomes containing histone H3. May serve as an epigenetic mark that propagates centromere identity through replication and cell division. Required for recruitment and assembly of kinetochore proteins, and as a consequence required for progress through mitosis, chromosome segregation and cytokinesis. The polypeptide is Histone H3-like centromeric protein A (Cenpa) (Mus musculus (Mouse)).